Here is a 369-residue protein sequence, read N- to C-terminus: Anhydro-N-acetylmuramic acid kinase (369 aa).

12–19 (GTSLDGVD) provides a ligand contact to ATP.

The protein belongs to the anhydro-N-acetylmuramic acid kinase family.

The catalysed reaction is 1,6-anhydro-N-acetyl-beta-muramate + ATP + H2O = N-acetyl-D-muramate 6-phosphate + ADP + H(+). It participates in amino-sugar metabolism; 1,6-anhydro-N-acetylmuramate degradation. Its pathway is cell wall biogenesis; peptidoglycan recycling. In terms of biological role, catalyzes the specific phosphorylation of 1,6-anhydro-N-acetylmuramic acid (anhMurNAc) with the simultaneous cleavage of the 1,6-anhydro ring, generating MurNAc-6-P. Is required for the utilization of anhMurNAc either imported from the medium or derived from its own cell wall murein, and thus plays a role in cell wall recycling. In Shigella flexneri serotype 5b (strain 8401), this protein is Anhydro-N-acetylmuramic acid kinase.